Reading from the N-terminus, the 245-residue chain is tRNA1(Val) (adenine(37)-N6)-methyltransferase (245 aa).

Belongs to the methyltransferase superfamily. tRNA (adenine-N(6)-)-methyltransferase family.

The protein localises to the cytoplasm. The enzyme catalyses adenosine(37) in tRNA1(Val) + S-adenosyl-L-methionine = N(6)-methyladenosine(37) in tRNA1(Val) + S-adenosyl-L-homocysteine + H(+). Its function is as follows. Specifically methylates the adenine in position 37 of tRNA(1)(Val) (anticodon cmo5UAC). This is tRNA1(Val) (adenine(37)-N6)-methyltransferase from Escherichia coli O157:H7 (strain EC4115 / EHEC).